The sequence spans 252 residues: Streptothricin hydrolase (252 aa).

The Nucleophile role is filled by Cys-158. Residues 230 to 242 (AVGPAAAPGLPVS) are compositionally biased toward low complexity. The interval 230–252 (AVGPAAAPGLPVSPAAPPPSPVR) is disordered. Positions 243–252 (PAAPPPSPVR) are enriched in pro residues.

The protein belongs to the isochorismatase family.

It carries out the reaction streptothricin F + H2O = streptothricin F acid. Functionally, catalyzes the hydrolysis of the amide bond of streptolidine lactam, thereby conferring streptothricin (ST) resistance. Can hydrolyze streptothricin-F and streptothricin-D. However, this strain is believed to be a ST nonproducer, which raises the possibility that its true role may not be its involvement in self-resistance to STs. May catalyze the hydrolysis of naturally occurring cyclic amide compounds that are structurally related to STs. The sequence is that of Streptothricin hydrolase (sttH) from Streptomyces noursei (Streptomyces albulus).